The following is a 550-amino-acid chain: Dihydroxy-acid dehydratase (550 aa).

Residue Asp78 coordinates Mg(2+). Cys119 contacts [2Fe-2S] cluster. Mg(2+) contacts are provided by Asp120 and Lys121. Lys121 is modified (N6-carboxylysine). Position 191 (Cys191) interacts with [2Fe-2S] cluster. Glu440 provides a ligand contact to Mg(2+). The active-site Proton acceptor is Ser466.

Belongs to the IlvD/Edd family. As to quaternary structure, homodimer. The cofactor is [2Fe-2S] cluster. Mg(2+) serves as cofactor.

It catalyses the reaction (2R)-2,3-dihydroxy-3-methylbutanoate = 3-methyl-2-oxobutanoate + H2O. The catalysed reaction is (2R,3R)-2,3-dihydroxy-3-methylpentanoate = (S)-3-methyl-2-oxopentanoate + H2O. Its pathway is amino-acid biosynthesis; L-isoleucine biosynthesis; L-isoleucine from 2-oxobutanoate: step 3/4. It functions in the pathway amino-acid biosynthesis; L-valine biosynthesis; L-valine from pyruvate: step 3/4. In terms of biological role, functions in the biosynthesis of branched-chain amino acids. Catalyzes the dehydration of (2R,3R)-2,3-dihydroxy-3-methylpentanoate (2,3-dihydroxy-3-methylvalerate) into 2-oxo-3-methylpentanoate (2-oxo-3-methylvalerate) and of (2R)-2,3-dihydroxy-3-methylbutanoate (2,3-dihydroxyisovalerate) into 2-oxo-3-methylbutanoate (2-oxoisovalerate), the penultimate precursor to L-isoleucine and L-valine, respectively. In Methanococcus maripaludis (strain C6 / ATCC BAA-1332), this protein is Dihydroxy-acid dehydratase.